Here is a 467-residue protein sequence, read N- to C-terminus: 3-isopropylmalate dehydratase large subunit (467 aa).

Positions 347, 407, and 410 each coordinate [4Fe-4S] cluster.

It belongs to the aconitase/IPM isomerase family. LeuC type 1 subfamily. Heterodimer of LeuC and LeuD. It depends on [4Fe-4S] cluster as a cofactor.

The enzyme catalyses (2R,3S)-3-isopropylmalate = (2S)-2-isopropylmalate. Its pathway is amino-acid biosynthesis; L-leucine biosynthesis; L-leucine from 3-methyl-2-oxobutanoate: step 2/4. Catalyzes the isomerization between 2-isopropylmalate and 3-isopropylmalate, via the formation of 2-isopropylmaleate. The sequence is that of 3-isopropylmalate dehydratase large subunit from Picosynechococcus sp. (strain ATCC 27264 / PCC 7002 / PR-6) (Agmenellum quadruplicatum).